We begin with the raw amino-acid sequence, 86 residues long: Kappa-theraphotoxin-Cg1a 1 (86 aa).

A signal peptide spans 1 to 21 (MKVSVLITLAVLGVMFVWASA). The propeptide occupies 22–50 (AELEERGSDQRDSPAWLKSMERIFQSGER). 3 cysteine pairs are disulfide-bonded: Cys-52–Cys-66, Cys-59–Cys-71, and Cys-65–Cys-78. The interval 55–56 (MF) is involved in active face. Phe-84 carries the phenylalanine amide modification.

The protein belongs to the neurotoxin 10 (Hwtx-1) family. 28 (Jztx-11) subfamily. In terms of tissue distribution, expressed by the venom gland.

Its subcellular location is the secreted. This toxin acts as a voltage-dependent gating-modifier. It inhibits the sodium conductance (IC(50)=124 nM) and slows the fast inactivation (EC(50)=1180 nM) of Nav1.5/SCN5A. It significantly shifts the activation to more depolarized voltages and decreases the deactivation of Nav1.5 currents upon extreme depolarization, but only slightly affects voltage-dependence of steady-state inactivation. In addition, this toxin causes an approximately five-fold decrease in the rate of recovery from inactivation and an approximately 1.9-fold reduction in the closed-state inactivation rate. This toxin integrates the functions of site 3 toxins (alpha-scorpion toxins) with site 4 toxins (beta-scorpion and spider toxins) by targeting multiple sites on Nav1.5. Also shows inhibition of voltage-gated potassium channels (5 uM completely inhibits Kv2.1/KCNB1, whereas 5 uM moderately inhibits Kv4.2/KCND2 Kv4.1/KCND1 channels). This chain is Kappa-theraphotoxin-Cg1a 1, found in Chilobrachys guangxiensis (Chinese earth tiger tarantula).